A 336-amino-acid chain; its full sequence is Ketol-acid reductoisomerase (NADP(+)) (336 aa).

Residues 2–182 (AKIYYQQDCN…GGARAGVLET (181 aa)) enclose the KARI N-terminal Rossmann domain. NADP(+) is bound by residues 25 to 28 (YGSQ), S51, S53, and 83 to 86 (DEKQ). H108 is an active-site residue. G134 contacts NADP(+). One can recognise a KARI C-terminal knotted domain in the interval 183-328 (TFREETETDL…AELRGLMSWT (146 aa)). D191, E195, E227, and E231 together coordinate Mg(2+). S252 is a binding site for substrate.

It belongs to the ketol-acid reductoisomerase family. Mg(2+) serves as cofactor.

The catalysed reaction is (2R)-2,3-dihydroxy-3-methylbutanoate + NADP(+) = (2S)-2-acetolactate + NADPH + H(+). It carries out the reaction (2R,3R)-2,3-dihydroxy-3-methylpentanoate + NADP(+) = (S)-2-ethyl-2-hydroxy-3-oxobutanoate + NADPH + H(+). It participates in amino-acid biosynthesis; L-isoleucine biosynthesis; L-isoleucine from 2-oxobutanoate: step 2/4. Its pathway is amino-acid biosynthesis; L-valine biosynthesis; L-valine from pyruvate: step 2/4. Its function is as follows. Involved in the biosynthesis of branched-chain amino acids (BCAA). Catalyzes an alkyl-migration followed by a ketol-acid reduction of (S)-2-acetolactate (S2AL) to yield (R)-2,3-dihydroxy-isovalerate. In the isomerase reaction, S2AL is rearranged via a Mg-dependent methyl migration to produce 3-hydroxy-3-methyl-2-ketobutyrate (HMKB). In the reductase reaction, this 2-ketoacid undergoes a metal-dependent reduction by NADPH to yield (R)-2,3-dihydroxy-isovalerate. The sequence is that of Ketol-acid reductoisomerase (NADP(+)) from Lachnoclostridium phytofermentans (strain ATCC 700394 / DSM 18823 / ISDg) (Clostridium phytofermentans).